The following is a 296-amino-acid chain: N-acetylmuramic acid 6-phosphate etherase (296 aa).

The region spanning 54–217 (VISCFQKGGR…STASMVGIGK (164 aa)) is the SIS domain. Catalysis depends on Glu82, which acts as the Proton donor. Residue Glu113 is part of the active site.

The protein belongs to the GCKR-like family. MurNAc-6-P etherase subfamily. As to quaternary structure, homodimer.

It catalyses the reaction N-acetyl-D-muramate 6-phosphate + H2O = N-acetyl-D-glucosamine 6-phosphate + (R)-lactate. It functions in the pathway amino-sugar metabolism; N-acetylmuramate degradation. In terms of biological role, specifically catalyzes the cleavage of the D-lactyl ether substituent of MurNAc 6-phosphate, producing GlcNAc 6-phosphate and D-lactate. This Listeria monocytogenes serotype 4b (strain CLIP80459) protein is N-acetylmuramic acid 6-phosphate etherase.